The primary structure comprises 307 residues: tRNA pseudouridine synthase B (307 aa).

The active-site Nucleophile is Asp-48.

The protein belongs to the pseudouridine synthase TruB family. Type 1 subfamily.

It catalyses the reaction uridine(55) in tRNA = pseudouridine(55) in tRNA. In terms of biological role, responsible for synthesis of pseudouridine from uracil-55 in the psi GC loop of transfer RNAs. The polypeptide is tRNA pseudouridine synthase B (Pasteurella multocida (strain Pm70)).